The sequence spans 347 residues: 2-hydroxyacid dehydrogenase A (347 aa).

Residues 157–158, D177, 234–236, and D260 contribute to the NAD(+) site; these read RI and TSR. Residue R236 is part of the active site. E265 is an active-site residue.

This sequence belongs to the D-isomer specific 2-hydroxyacid dehydrogenase family.

It catalyses the reaction a (2R)-2-hydroxycarboxylate + NADP(+) = a 2-oxocarboxylate + NADPH + H(+). In terms of biological role, 2-hydroxyacid dehydrogenase that is capable to reduce pyruvate, hydroxypyruvate and glyoxylate in a NADPH- or NADH-dependent manner. In contrast to 2-HadhD/morA, does not recognize 4-methyl-2-oxopentanoate (MOA) as a substrate. This chain is 2-hydroxyacid dehydrogenase A, found in Aspergillus oryzae (strain ATCC 42149 / RIB 40) (Yellow koji mold).